The following is a 90-amino-acid chain: Probable Fe(2+)-trafficking protein (90 aa).

Belongs to the Fe(2+)-trafficking protein family. In terms of assembly, monomer.

Could be a mediator in iron transactions between iron acquisition and iron-requiring processes, such as synthesis and/or repair of Fe-S clusters in biosynthetic enzymes. The polypeptide is Probable Fe(2+)-trafficking protein (Yersinia enterocolitica serotype O:8 / biotype 1B (strain NCTC 13174 / 8081)).